The following is a 201-amino-acid chain: Glycerol-3-phosphate acyltransferase (201 aa).

The next 5 membrane-spanning stretches (helical) occupy residues 3 to 23 (LFAIFYLFLAYLLGSVSSAIL), 53 to 73 (WVALSVLLFDMLKGMLPVWLG), 80 to 100 (HFELGMVALGACLGHIFPIFF), 115 to 135 (IAPISWGVAGSMLGTWLLIFF), and 153 to 175 (FYVWWFKPEFTFPVALVCCLLIY).

The protein belongs to the PlsY family. As to quaternary structure, probably interacts with PlsX.

It is found in the cell inner membrane. The enzyme catalyses an acyl phosphate + sn-glycerol 3-phosphate = a 1-acyl-sn-glycero-3-phosphate + phosphate. It participates in lipid metabolism; phospholipid metabolism. Functionally, catalyzes the transfer of an acyl group from acyl-phosphate (acyl-PO(4)) to glycerol-3-phosphate (G3P) to form lysophosphatidic acid (LPA). This enzyme utilizes acyl-phosphate as fatty acyl donor, but not acyl-CoA or acyl-ACP. This chain is Glycerol-3-phosphate acyltransferase, found in Pasteurella multocida (strain Pm70).